A 262-amino-acid chain; its full sequence is uncharacterized protein (262 aa).

The helical transmembrane segment at 13–35 (VVGALLTVVVIVTAAGIIYVISH) threads the bilayer.

The protein localises to the membrane. This is an uncharacterized protein from Archaeoglobus fulgidus (strain ATCC 49558 / DSM 4304 / JCM 9628 / NBRC 100126 / VC-16).